The primary structure comprises 193 residues: Ion-translocating oxidoreductase complex subunit A (193 aa).

Transmembrane regions (helical) follow at residues 5-25, 39-59, 72-92, 102-122, 134-154, and 171-191; these read ILLI…FLGL, IGMG…AYLV, LRTL…EMVI, LLGI…VALL, VIYG…FAAL, and SIAL…SGLV.

Belongs to the NqrDE/RnfAE family. As to quaternary structure, the complex is composed of six subunits: RnfA, RnfB, RnfC, RnfD, RnfE and RnfG.

It is found in the cell inner membrane. Its function is as follows. Part of a membrane-bound complex that couples electron transfer with translocation of ions across the membrane. The sequence is that of Ion-translocating oxidoreductase complex subunit A from Histophilus somni (strain 129Pt) (Haemophilus somnus).